The chain runs to 147 residues: Hemoglobin subunit delta (147 aa).

Residues 3-147 (HLTADETALV…VANALAHKYH (145 aa)) form the Globin domain. Ser51 carries the phosphoserine modification. The heme b site is built by His64 and His93.

It belongs to the globin family. In terms of assembly, heterotetramer of two delta chains and two alpha chains. As to expression, red blood cells.

This Dugong dugon (Dugong) protein is Hemoglobin subunit delta (HBD).